The following is a 437-amino-acid chain: Enolase (437 aa).

Residue Q162 coordinates (2R)-2-phosphoglycerate. E204 functions as the Proton donor in the catalytic mechanism. The Mg(2+) site is built by D251, E297, and D324. (2R)-2-phosphoglycerate contacts are provided by K349, R378, S379, and K400. K349 functions as the Proton acceptor in the catalytic mechanism.

It belongs to the enolase family. Mg(2+) is required as a cofactor.

The protein localises to the cytoplasm. The protein resides in the secreted. It localises to the cell surface. It carries out the reaction (2R)-2-phosphoglycerate = phosphoenolpyruvate + H2O. The protein operates within carbohydrate degradation; glycolysis; pyruvate from D-glyceraldehyde 3-phosphate: step 4/5. Functionally, catalyzes the reversible conversion of 2-phosphoglycerate (2-PG) into phosphoenolpyruvate (PEP). It is essential for the degradation of carbohydrates via glycolysis. This chain is Enolase, found in Chlorobium phaeovibrioides (strain DSM 265 / 1930) (Prosthecochloris vibrioformis (strain DSM 265)).